An 897-amino-acid chain; its full sequence is Patched domain-containing protein 1 (897 aa).

A helical membrane pass occupies residues P25–S45. N-linked (GlcNAc...) asparagine glycosylation is found at N132, N167, and N179. 2 helical membrane passes run G271–I291 and G306–I326. The 161-residue stretch at L273–F433 folds into the SSD domain. N332 is a glycosylation site (N-linked (GlcNAc...) asparagine). 4 helical membrane-spanning segments follow: residues L335–A355, V377–S397, V414–A434, and P506–I526. Residues N572 and N603 are each glycosylated (N-linked (GlcNAc...) asparagine). Helical transmembrane passes span P701–I721, F727–W747, and I754–L774. N803 carries an N-linked (GlcNAc...) asparagine glycan. 2 helical membrane passes run C806–F826 and L831–F851. The span at K856–R866 shows a compositional bias: basic residues. Positions K856–E881 are disordered. A compositionally biased stretch (basic and acidic residues) spans K867–E881.

The protein belongs to the patched family.

It localises to the cell membrane. It is found in the cell projection. Its subcellular location is the dendritic spine. Its function is as follows. Can bind cholesterol in vitro. This Danio rerio (Zebrafish) protein is Patched domain-containing protein 1 (ptchd1).